A 364-amino-acid chain; its full sequence is D-alanine--D-alanine ligase (364 aa).

The region spanning 141–346 (KNLFAQAGLR…YSELIERLIA (206 aa)) is the ATP-grasp domain. Residue 174-229 (EQELGYPCFVKPANAGSSVGISKCKQRDDLKTAFAEAFKYDRKIIIEESIVGREIE) participates in ATP binding. 3 residues coordinate Mg(2+): Asp-300, Glu-313, and Asn-315.

It belongs to the D-alanine--D-alanine ligase family. The cofactor is Mg(2+). It depends on Mn(2+) as a cofactor.

It localises to the cytoplasm. The enzyme catalyses 2 D-alanine + ATP = D-alanyl-D-alanine + ADP + phosphate + H(+). Its pathway is cell wall biogenesis; peptidoglycan biosynthesis. In terms of biological role, cell wall formation. The protein is D-alanine--D-alanine ligase of Geobacillus thermodenitrificans (strain NG80-2).